The following is a 421-amino-acid chain: Uracil permease (421 aa).

12 consecutive transmembrane segments (helical) span residues 18–38 (IPLS…VPML), 41–61 (INPA…IFLC), 65–85 (IPAY…VIST), 89–109 (EAAL…GLLV), 115–135 (GWIE…VIGL), 160–180 (PKVI…NVMF), 186–206 (IIPI…LGIV), 232–252 (IAII…HLIV), 304–324 (VYSI…SFVG), 329–349 (LIQT…FGVI), 371–391 (ILTA…WGNF), and 393–413 (MKGM…FNII).

This sequence belongs to the nucleobase:cation symporter-2 (NCS2) (TC 2.A.40) family.

Its subcellular location is the cell membrane. Inhibited by the proton gradient disruptor carbonyl cyanide m-chlorophenylhydrazone (CCCP), but not by the sodium gradient disruptor ouabain. Both xanthine and uric acid act as competitive inhibitors of uracil transport. Specific for the uptake of uracil. Transport is probably proton-dependent. This Paenibacillus larvae subsp. larvae (strain NRRL B-3650 / LMG 16245) protein is Uracil permease.